The primary structure comprises 433 residues: Shufflon protein C' (433 aa).

The interval 1 to 361 is constant region; that stretch reads MKKYDRGWAS…TGAILSCQSG (361 aa). A variable region region spans residues 362 to 433; that stretch reads RWSGGNKINY…HVDAYCCPFN (72 aa).

The polypeptide is Shufflon protein C' (Escherichia coli).